The primary structure comprises 194 residues: dITP/XTP pyrophosphatase (194 aa).

Substrate is bound at residue 11–16 (SHNAGK). The active-site Proton acceptor is the aspartate 70. Aspartate 70 is a binding site for Mg(2+). Residues serine 71, 149-152 (FGYD), lysine 172, and 177-178 (HR) contribute to the substrate site.

Belongs to the HAM1 NTPase family. As to quaternary structure, homodimer. It depends on Mg(2+) as a cofactor.

It catalyses the reaction XTP + H2O = XMP + diphosphate + H(+). The enzyme catalyses dITP + H2O = dIMP + diphosphate + H(+). The catalysed reaction is ITP + H2O = IMP + diphosphate + H(+). Pyrophosphatase that catalyzes the hydrolysis of nucleoside triphosphates to their monophosphate derivatives, with a high preference for the non-canonical purine nucleotides XTP (xanthosine triphosphate), dITP (deoxyinosine triphosphate) and ITP. Seems to function as a house-cleaning enzyme that removes non-canonical purine nucleotides from the nucleotide pool, thus preventing their incorporation into DNA/RNA and avoiding chromosomal lesions. The sequence is that of dITP/XTP pyrophosphatase from Thermosynechococcus vestitus (strain NIES-2133 / IAM M-273 / BP-1).